The sequence spans 752 residues: MAKERIYELAKELKMPSKDLVNMANRQGMGVKSHMSSVTPDQAQQLRQLAKGGQKTTNNQHQPVKKNDGHNKQNNHQAQNHNQHHDHDKTQNERPQKKNNSRSNNGTKDNNQHQNNGGRFGGSLNNDQGRNGKRFNKKNKKNKKHNKNKRLREVAHKQPTQRKDKPLPEVLEYTDGMNAQDLGKILHRSPAEIVKKLFMLGVMINQNQSLDKDTIELLATDYGIEAKEKVQVDVSDIDKMFEDEQNNTEHQVTRPAVVTVMGHVDHGKTTLLDKLRHSHVTEHEAGGITQEIGAYQVHYNDQLITFLDTPGHAAFTEMRARGANITDITVLVVAADDGVMPQTVEAIHHAQAAQTPIIVAVNKIDKPGANPDRVTEELAKYNLIPEDWGGDTIFVKISAKFGKNLDELLDMILLQAEMLELKANPDQNAAGSVVEARLDQGRGSVATVLVQQGTLHVGDPIVVGNTFGRVRTMTNENGRRIKEATPSTPVEITGLNEVPEAGDRFVVFDDEKTARAAGEERAKRAMDKERQKTSHVTLDNLFATMKKGQMKTLPIIIKADVQGSVEALSQSLQKIKVDGVRVDIIHQAVGAINQSDVTLAEASNAVIIGFNVRPTAVAKTLADSNSIDIRLHRVIYDAIEEVEDAMKGMLEPVYKEETIGQVEVRQIYKASKVGTIAGGMVTSGKITRDAKVRLVRDGVVIYEGELGSLKRFKDDVKEVKQGYECGLTIENYNDIKEMDVIEAYKMKEVPVK.

The tract at residues 26-167 is disordered; that stretch reads RQGMGVKSHM…QPTQRKDKPL (142 aa). Residues 34-47 show a composition bias toward polar residues; sequence HMSSVTPDQAQQLR. Low complexity predominate over residues 72–81; it reads KQNNHQAQNH. The segment covering 83 to 96 has biased composition (basic and acidic residues); that stretch reads QHHDHDKTQNERPQ. Residues 101–129 are compositionally biased toward polar residues; that stretch reads SRSNNGTKDNNQHQNNGGRFGGSLNNDQG. Over residues 131-150 the composition is skewed to basic residues; the sequence is NGKRFNKKNKKNKKHNKNKR. Residues 151–167 show a composition bias toward basic and acidic residues; the sequence is LREVAHKQPTQRKDKPL. The tr-type G domain occupies 253 to 422; sequence TRPAVVTVMG…LLQAEMLELK (170 aa). The segment at 262–269 is G1; it reads GHVDHGKT. 262-269 contributes to the GTP binding site; it reads GHVDHGKT. Positions 287 to 291 are G2; that stretch reads GITQE. The G3 stretch occupies residues 308–311; it reads DTPG. GTP-binding positions include 308–312 and 362–365; these read DTPGH and NKID. Residues 362 to 365 form a G4 region; that stretch reads NKID. The interval 398 to 400 is G5; sequence SAK.

The protein belongs to the TRAFAC class translation factor GTPase superfamily. Classic translation factor GTPase family. IF-2 subfamily.

The protein resides in the cytoplasm. One of the essential components for the initiation of protein synthesis. Protects formylmethionyl-tRNA from spontaneous hydrolysis and promotes its binding to the 30S ribosomal subunits. Also involved in the hydrolysis of GTP during the formation of the 70S ribosomal complex. In Limosilactobacillus reuteri (strain DSM 20016) (Lactobacillus reuteri), this protein is Translation initiation factor IF-2.